An 82-amino-acid polypeptide reads, in one-letter code: DNA-directed RNA polymerase subunit omega (82 aa).

The protein belongs to the RNA polymerase subunit omega family. In terms of assembly, the RNAP catalytic core consists of 2 alpha, 1 beta, 1 beta' and 1 omega subunit. When a sigma factor is associated with the core the holoenzyme is formed, which can initiate transcription.

The catalysed reaction is RNA(n) + a ribonucleoside 5'-triphosphate = RNA(n+1) + diphosphate. Functionally, promotes RNA polymerase assembly. Latches the N- and C-terminal regions of the beta' subunit thereby facilitating its interaction with the beta and alpha subunits. This is DNA-directed RNA polymerase subunit omega from Lachnoclostridium phytofermentans (strain ATCC 700394 / DSM 18823 / ISDg) (Clostridium phytofermentans).